The chain runs to 176 residues: Ubiquitin-conjugating enzyme E2-20 kDa (176 aa).

A compositionally biased stretch (polar residues) spans 1–20 (MDSDMQNQNPHTNSKNSSSA). Residues 1 to 25 (MDSDMQNQNPHTNSKNSSSAGMAVD) form a disordered region. A UBC core domain is found at 28-175 (SVTKRLRSEL…LMQRYKEIDE (148 aa)). The active-site Glycyl thioester intermediate is the Cys113.

This sequence belongs to the ubiquitin-conjugating enzyme family.

It carries out the reaction S-ubiquitinyl-[E1 ubiquitin-activating enzyme]-L-cysteine + [E2 ubiquitin-conjugating enzyme]-L-cysteine = [E1 ubiquitin-activating enzyme]-L-cysteine + S-ubiquitinyl-[E2 ubiquitin-conjugating enzyme]-L-cysteine.. It participates in protein modification; protein ubiquitination. Functionally, catalyzes the covalent attachment of ubiquitin to other proteins. This Schizosaccharomyces pombe (strain 972 / ATCC 24843) (Fission yeast) protein is Ubiquitin-conjugating enzyme E2-20 kDa (ubc11).